Reading from the N-terminus, the 68-residue chain is Gallinacin-10 (68 aa).

Residues 1-19 (MKILCLLFAVLLFLFQAAP) form the signal peptide. The propeptide occupies 20–25 (GSADPL). Intrachain disulfides connect Cys32–Cys61, Cys39–Cys54, and Cys44–Cys62.

Belongs to the beta-defensin family. As to expression, strong expression in the testis, liver, gall bladder and kidney. Also expressed in the ovary and male and female reproductive tracts. Expressed in the ovarian stroma and the theca and granulosa layers of the ovarian follicle.

Its subcellular location is the secreted. It localises to the cytoplasmic granule. Its function is as follows. Has bactericidal activity. This is Gallinacin-10 (GAL10) from Gallus gallus (Chicken).